We begin with the raw amino-acid sequence, 223 residues long: NLP effector protein 2 (223 aa).

Residues 90–100 (AIMYSWYFPKD) carry the Conserved undecapeptide motif motif. Positions 107 to 113 (GHRHDWE) match the Conserved p motif motif.

Belongs to the Necrosis inducing protein (NPP1) family.

It localises to the secreted. Its subcellular location is the host cytoplasm. Functionally, probable secreted effector that may act as a pathogen-associated molecular pattern (PAMP) recognized by the plant immune system. Seems not to induce necrosis, neither in several susceptible or resistant Vitis species nor in the dicot model plant Nicotiana benthamiana. The polypeptide is NLP effector protein 2 (Plasmopara viticola (Downy mildew of grapevine)).